A 228-amino-acid polypeptide reads, in one-letter code: MKIAGIDEAGRGPVIGPMVIAAVVVDENSLPKLEELKVRDSKKLTPKRREKLFNEILGVLDDYVILELPPDVIGSREGTLNEFEVENFAKALNSLKVKPDVIYADAADVDEERFARELGERLNFEAEVVAKHKADDIFPVVSAASILAKVTRDRAVEKLKEEYGEIGSGYPSDPRTRAFLENYYREHGEFPPIVRKGWKTLKKIAEKVESEKKAEERQATLDRYFRKV.

The RNase H type-2 domain occupies 1–210 (MKIAGIDEAG…LKKIAEKVES (210 aa)). Positions 7, 8, and 105 each coordinate a divalent metal cation.

It belongs to the RNase HII family. As to quaternary structure, monomer. Requires Mn(2+) as cofactor. Mg(2+) serves as cofactor.

The protein localises to the cytoplasm. It catalyses the reaction Endonucleolytic cleavage to 5'-phosphomonoester.. In terms of biological role, endonuclease that specifically degrades the RNA of RNA-DNA hybrids. This Thermococcus kodakarensis (strain ATCC BAA-918 / JCM 12380 / KOD1) (Pyrococcus kodakaraensis (strain KOD1)) protein is Ribonuclease HII (rnhB).